The sequence spans 538 residues: Putative outer membrane porin BglH (538 aa).

Positions 1-25 are cleaved as a signal peptide; the sequence is MFRRNIITSAILLMAPLAFSAQSLA.

It belongs to the porin LamB (TC 1.B.3) family.

The protein resides in the cell outer membrane. May be a sugar porin with a broad carbohydrate specificity. This is Putative outer membrane porin BglH (bglH) from Escherichia coli O6:K15:H31 (strain 536 / UPEC).